Consider the following 297-residue polypeptide: HTH-type transcriptional regulator AceR (297 aa).

The 60-residue stretch at 1–60 (MNINQEQLLMFQAVMETGSFSAAARKLGKVPSAVSMSIANLEIDLNLTLFERKGREPTPT) folds into the HTH lysR-type domain. The segment at residues 20–39 (FSAAARKLGKVPSAVSMSIA) is a DNA-binding region (H-T-H motif).

It belongs to the LysR transcriptional regulatory family. Homodimer and homotetramer. Binding of chlorhexidine at the inducer-binding domain causes a quaternary structural change that favors interactions between dimers to form tetramers.

The protein localises to the cytoplasm. Regulates the expression of the AceI transporter. Binds DNA and chlorhexidine. Binds to regulatory sites within the intergenic region between the aceI and aceR genes, and affects the interaction between RNA polymerase (RNAP) and promoter DNA both in the presence and in the absence of chlorhexidine. In the absence of chlorhexidine, prevents transcription of the aceI gene by disrupting interactions between the promoter DNA and RNAP. In the presence of chlorhexidine, activates expression of aceI. When AceR interacts with chlorhexidine, it undergoes a conformational change and the tetrameric form either releases the DNA or shifts the position of the DNA-binding region to allow RNAP to bind onto the promoter DNA to proceed with aceI transcription. The sequence is that of HTH-type transcriptional regulator AceR from Acinetobacter baumannii (strain ATCC 17978 / DSM 105126 / CIP 53.77 / LMG 1025 / NCDC KC755 / 5377).